The sequence spans 75 residues: Small integral membrane protein 7-A (75 aa).

The N-terminal stretch at 1–17 is a signal peptide; it reads MIGDLLLFGTLLVNAGA. At 18–53 the chain is on the extracellular side; the sequence is VLNFKLKKKESQGFGDDLTEATTGDNIREFLLSLRY. The helical transmembrane segment at 54–74 threads the bilayer; sequence FRIFIALWNIFMMFCMIVLFG. Ser75 is a topological domain (cytoplasmic).

It belongs to the SMIM7 family.

It localises to the membrane. The polypeptide is Small integral membrane protein 7-A (smim7-a) (Xenopus laevis (African clawed frog)).